Reading from the N-terminus, the 318-residue chain is Transaldolase (318 aa).

Lys-132 acts as the Schiff-base intermediate with substrate in catalysis.

This sequence belongs to the transaldolase family. Type 1 subfamily. In terms of assembly, homodimer.

The protein resides in the cytoplasm. The catalysed reaction is D-sedoheptulose 7-phosphate + D-glyceraldehyde 3-phosphate = D-erythrose 4-phosphate + beta-D-fructose 6-phosphate. The protein operates within carbohydrate degradation; pentose phosphate pathway; D-glyceraldehyde 3-phosphate and beta-D-fructose 6-phosphate from D-ribose 5-phosphate and D-xylulose 5-phosphate (non-oxidative stage): step 2/3. Transaldolase is important for the balance of metabolites in the pentose-phosphate pathway. The polypeptide is Transaldolase (Shewanella pealeana (strain ATCC 700345 / ANG-SQ1)).